The chain runs to 525 residues: uncharacterized protein (525 aa).

A Phosphoserine modification is found at serine 55. 13 consecutive transmembrane segments (helical) span residues 81 to 101, 120 to 140, 147 to 167, 173 to 193, 208 to 228, 238 to 258, 295 to 315, 318 to 338, 350 to 370, 388 to 408, 413 to 433, 454 to 474, and 484 to 504; these read AYIV…PNFY, LLGQ…LGPL, KLVY…CALA, LVIS…NVAG, MYMF…GTGV, WLYW…VFTP, FVFF…SLGI, GFVN…YFSI, YMAA…QCWL, FIMT…FAFC, IHYI…YHIW, AFEL…ALMF, and AVVG…YFYG.

The protein belongs to the major facilitator superfamily. CAR1 family.

It is found in the membrane. This is an uncharacterized protein from Schizosaccharomyces pombe (strain 972 / ATCC 24843) (Fission yeast).